The following is a 1190-amino-acid chain: Pyruvate-flavodoxin oxidoreductase (1190 aa).

4Fe-4S ferredoxin-type domains follow at residues 687–716 (EIPVWDTDVCIQCGKCVMVCPHSVIRSKVY) and 743–773 (FTIQVAAEDCTGCGICVDVCPAKNKAQPRKK). [4Fe-4S] cluster is bound by residues cysteine 696, cysteine 699, cysteine 702, cysteine 706, cysteine 752, cysteine 755, cysteine 758, cysteine 762, cysteine 826, cysteine 829, cysteine 854, and cysteine 1089.

Belongs to the pyruvate:ferredoxin/flavodoxin oxidoreductase family. [4Fe-4S] cluster is required as a cofactor.

It catalyses the reaction oxidized [flavodoxin] + pyruvate + CoA + 2 H(+) = reduced [flavodoxin] + acetyl-CoA + CO2. Oxidoreductase required for the transfer of electrons from pyruvate to flavodoxin, which reduces nitrogenase. The protein is Pyruvate-flavodoxin oxidoreductase (nifJ) of Trichormus variabilis (strain ATCC 29413 / PCC 7937) (Anabaena variabilis).